Here is a 231-residue protein sequence, read N- to C-terminus: Uridylate kinase (231 aa).

9 to 12 is an ATP binding site; the sequence is KLSG. A UMP-binding site is contributed by Gly49. Residues Gly50 and Arg54 each contribute to the ATP site. Residues Asp69 and 130–137 each bind UMP; that span reads AGMPYFST. Residues Asn158, Tyr164, and Asp167 each contribute to the ATP site.

Belongs to the UMP kinase family. As to quaternary structure, homohexamer.

The protein localises to the cytoplasm. The catalysed reaction is UMP + ATP = UDP + ADP. The protein operates within pyrimidine metabolism; CTP biosynthesis via de novo pathway; UDP from UMP (UMPK route): step 1/1. Its activity is regulated as follows. Inhibited by UTP. Catalyzes the reversible phosphorylation of UMP to UDP. The sequence is that of Uridylate kinase from Tropheryma whipplei (strain Twist) (Whipple's bacillus).